The following is a 261-amino-acid chain: Cytochrome c oxidase subunit 3 (261 aa).

Over 1–15 (MAHQAHAYHMVDPSP) the chain is Mitochondrial matrix. The chain crosses the membrane as a helical span at residues 16-34 (WPLTGAVAALLLTSGLAVW). Topologically, residues 35-40 (FHFKSL) are mitochondrial intermembrane. Residues 41-66 (TLLAMGLLLMILTMIQWWRDIIREGT) form a helical membrane-spanning segment. Over 67–72 (FQGHHT) the chain is Mitochondrial matrix. A helical transmembrane segment spans residues 73-105 (PPVQKGLRYGMILFITSEVFFFLGFFWAFYHSS). At 106 to 128 (LAPTPELGGIWPPTGITPLDPFE) the chain is on the mitochondrial intermembrane side. The chain crosses the membrane as a helical span at residues 129–152 (VPLLNTAVLLASGVTVTWTHHSLM). The Mitochondrial matrix segment spans residues 153–155 (EGK). The chain crosses the membrane as a helical span at residues 156–183 (RTEATQALTLTILLGLYFTALQAMEYYE). Residues 184–190 (APFTIAD) are Mitochondrial intermembrane-facing. Residues 191 to 223 (GVYGTTFFVATGFHGLHVIIGSTFLAGCLLRQI) form a helical membrane-spanning segment. The Mitochondrial matrix portion of the chain corresponds to 224–232 (LYHFTSSHH). Residues 233–256 (FGFEAAAWYWHFVDVVWLFLYVSI) traverse the membrane as a helical segment. The Mitochondrial intermembrane segment spans residues 257-261 (YWWGS).

It belongs to the cytochrome c oxidase subunit 3 family. Component of the cytochrome c oxidase (complex IV, CIV), a multisubunit enzyme composed of 14 subunits. The complex is composed of a catalytic core of 3 subunits MT-CO1, MT-CO2 and MT-CO3, encoded in the mitochondrial DNA, and 11 supernumerary subunits COX4I, COX5A, COX5B, COX6A, COX6B, COX6C, COX7A, COX7B, COX7C, COX8 and NDUFA4, which are encoded in the nuclear genome. The complex exists as a monomer or a dimer and forms supercomplexes (SCs) in the inner mitochondrial membrane with NADH-ubiquinone oxidoreductase (complex I, CI) and ubiquinol-cytochrome c oxidoreductase (cytochrome b-c1 complex, complex III, CIII), resulting in different assemblies (supercomplex SCI(1)III(2)IV(1) and megacomplex MCI(2)III(2)IV(2)).

It localises to the mitochondrion inner membrane. It catalyses the reaction 4 Fe(II)-[cytochrome c] + O2 + 8 H(+)(in) = 4 Fe(III)-[cytochrome c] + 2 H2O + 4 H(+)(out). Its function is as follows. Component of the cytochrome c oxidase, the last enzyme in the mitochondrial electron transport chain which drives oxidative phosphorylation. The respiratory chain contains 3 multisubunit complexes succinate dehydrogenase (complex II, CII), ubiquinol-cytochrome c oxidoreductase (cytochrome b-c1 complex, complex III, CIII) and cytochrome c oxidase (complex IV, CIV), that cooperate to transfer electrons derived from NADH and succinate to molecular oxygen, creating an electrochemical gradient over the inner membrane that drives transmembrane transport and the ATP synthase. Cytochrome c oxidase is the component of the respiratory chain that catalyzes the reduction of oxygen to water. Electrons originating from reduced cytochrome c in the intermembrane space (IMS) are transferred via the dinuclear copper A center (CU(A)) of subunit 2 and heme A of subunit 1 to the active site in subunit 1, a binuclear center (BNC) formed by heme A3 and copper B (CU(B)). The BNC reduces molecular oxygen to 2 water molecules using 4 electrons from cytochrome c in the IMS and 4 protons from the mitochondrial matrix. The polypeptide is Cytochrome c oxidase subunit 3 (mt-co3) (Polypterus ornatipinnis (Ornate bichir)).